Here is a 200-residue protein sequence, read N- to C-terminus: Ribosome maturation factor RimM (200 aa).

Positions 103-181 constitute a PRC barrel domain; it reads KEGEYYFYQL…KIVAKRLEYL (79 aa).

It belongs to the RimM family. Binds ribosomal protein uS19.

The protein resides in the cytoplasm. An accessory protein needed during the final step in the assembly of 30S ribosomal subunit, possibly for assembly of the head region. Essential for efficient processing of 16S rRNA. May be needed both before and after RbfA during the maturation of 16S rRNA. It has affinity for free ribosomal 30S subunits but not for 70S ribosomes. This Kosmotoga olearia (strain ATCC BAA-1733 / DSM 21960 / TBF 19.5.1) protein is Ribosome maturation factor RimM.